A 203-amino-acid polypeptide reads, in one-letter code: N-(5'-phosphoribosyl)anthranilate isomerase (203 aa).

This sequence belongs to the TrpF family.

It catalyses the reaction N-(5-phospho-beta-D-ribosyl)anthranilate = 1-(2-carboxyphenylamino)-1-deoxy-D-ribulose 5-phosphate. It functions in the pathway amino-acid biosynthesis; L-tryptophan biosynthesis; L-tryptophan from chorismate: step 3/5. The polypeptide is N-(5'-phosphoribosyl)anthranilate isomerase (Listeria innocua serovar 6a (strain ATCC BAA-680 / CLIP 11262)).